We begin with the raw amino-acid sequence, 62 residues long: MKSIRCKNCNKLLFKADSFDHIEIRCPRCKRHIIMLNACEHPTEKHCGKREKITHSDETVCY.

The protein belongs to the com family.

This is Cryptic Mu-phage protein com from Shigella dysenteriae.